The chain runs to 226 residues: Uridylate kinase (226 aa).

Residue 9–10 (GS) participates in ATP binding. Gly46 contacts UMP. Positions 47 and 51 each coordinate ATP. Residues Asp68 and 116–122 (THPGHTT) each bind UMP. The ATP site is built by Thr142, Asn143, Tyr148, and Asp151.

It belongs to the UMP kinase family. As to quaternary structure, homohexamer.

The protein resides in the cytoplasm. It carries out the reaction UMP + ATP = UDP + ADP. The protein operates within pyrimidine metabolism; CTP biosynthesis via de novo pathway; UDP from UMP (UMPK route): step 1/1. Inhibited by UTP. Catalyzes the reversible phosphorylation of UMP to UDP. The sequence is that of Uridylate kinase from Methanocaldococcus jannaschii (strain ATCC 43067 / DSM 2661 / JAL-1 / JCM 10045 / NBRC 100440) (Methanococcus jannaschii).